A 123-amino-acid chain; its full sequence is UPF0231 protein PMI2039 (123 aa).

The protein belongs to the UPF0231 family.

This is UPF0231 protein PMI2039 from Proteus mirabilis (strain HI4320).